Reading from the N-terminus, the 223-residue chain is Chalcone--flavanone isomerase (223 aa).

Substrate-binding residues include T50, N114, and T191.

This sequence belongs to the chalcone isomerase family.

The catalysed reaction is a chalcone = a flavanone.. Its pathway is secondary metabolite biosynthesis; flavonoid biosynthesis. In terms of biological role, catalyzes the intramolecular cyclization of bicyclic chalcones into tricyclic (S)-flavanones. Responsible for the isomerization of 4,2',4',6'-tetrahydroxychalcone (also termed chalcone) into naringenin. The chain is Chalcone--flavanone isomerase (CHI) from Pisum sativum (Garden pea).